Reading from the N-terminus, the 670-residue chain is DNA ligase (670 aa).

NAD(+) is bound by residues 33–37, 82–83, and glutamate 114; these read DAEYD and SL. Residue lysine 116 is the N6-AMP-lysine intermediate of the active site. The NAD(+) site is built by arginine 137, glutamate 173, lysine 291, and lysine 315. Positions 409, 412, 427, and 433 each coordinate Zn(2+). The BRCT domain maps to 592–670; it reads VQSDRLSGNT…ENALAELLSD (79 aa).

This sequence belongs to the NAD-dependent DNA ligase family. LigA subfamily. The cofactor is Mg(2+). Mn(2+) is required as a cofactor.

The enzyme catalyses NAD(+) + (deoxyribonucleotide)n-3'-hydroxyl + 5'-phospho-(deoxyribonucleotide)m = (deoxyribonucleotide)n+m + AMP + beta-nicotinamide D-nucleotide.. In terms of biological role, DNA ligase that catalyzes the formation of phosphodiester linkages between 5'-phosphoryl and 3'-hydroxyl groups in double-stranded DNA using NAD as a coenzyme and as the energy source for the reaction. It is essential for DNA replication and repair of damaged DNA. The chain is DNA ligase from Idiomarina loihiensis (strain ATCC BAA-735 / DSM 15497 / L2-TR).